Here is a 278-residue protein sequence, read N- to C-terminus: Ribosomal RNA small subunit methyltransferase A (278 aa).

S-adenosyl-L-methionine-binding residues include asparagine 18, leucine 20, glycine 45, glutamate 66, aspartate 89, and asparagine 110.

It belongs to the class I-like SAM-binding methyltransferase superfamily. rRNA adenine N(6)-methyltransferase family. RsmA subfamily.

It is found in the cytoplasm. It carries out the reaction adenosine(1518)/adenosine(1519) in 16S rRNA + 4 S-adenosyl-L-methionine = N(6)-dimethyladenosine(1518)/N(6)-dimethyladenosine(1519) in 16S rRNA + 4 S-adenosyl-L-homocysteine + 4 H(+). Specifically dimethylates two adjacent adenosines (A1518 and A1519) in the loop of a conserved hairpin near the 3'-end of 16S rRNA in the 30S particle. May play a critical role in biogenesis of 30S subunits. The chain is Ribosomal RNA small subunit methyltransferase A from Cupriavidus pinatubonensis (strain JMP 134 / LMG 1197) (Cupriavidus necator (strain JMP 134)).